The primary structure comprises 118 residues: Small ribosomal subunit protein uS13 (118 aa).

The segment at 94–118 is disordered; that stretch reads GLPLRGQRTKTNARTRKGPRKPIRK.

The protein belongs to the universal ribosomal protein uS13 family. Part of the 30S ribosomal subunit. Forms a loose heterodimer with protein S19. Forms two bridges to the 50S subunit in the 70S ribosome.

In terms of biological role, located at the top of the head of the 30S subunit, it contacts several helices of the 16S rRNA. In the 70S ribosome it contacts the 23S rRNA (bridge B1a) and protein L5 of the 50S subunit (bridge B1b), connecting the 2 subunits; these bridges are implicated in subunit movement. Contacts the tRNAs in the A and P-sites. This Alcanivorax borkumensis (strain ATCC 700651 / DSM 11573 / NCIMB 13689 / SK2) protein is Small ribosomal subunit protein uS13.